A 210-amino-acid polypeptide reads, in one-letter code: Large ribosomal subunit protein uL3 (210 aa).

This sequence belongs to the universal ribosomal protein uL3 family. Part of the 50S ribosomal subunit. Forms a cluster with proteins L14 and L19.

Its function is as follows. One of the primary rRNA binding proteins, it binds directly near the 3'-end of the 23S rRNA, where it nucleates assembly of the 50S subunit. This Geobacter sulfurreducens (strain ATCC 51573 / DSM 12127 / PCA) protein is Large ribosomal subunit protein uL3.